A 153-amino-acid polypeptide reads, in one-letter code: NAD(P)H-quinone oxidoreductase subunit N (153 aa).

The protein belongs to the complex I NdhN subunit family. In terms of assembly, NDH-1 can be composed of about 15 different subunits; different subcomplexes with different compositions have been identified which probably have different functions.

The protein resides in the cellular thylakoid membrane. It catalyses the reaction a plastoquinone + NADH + (n+1) H(+)(in) = a plastoquinol + NAD(+) + n H(+)(out). The enzyme catalyses a plastoquinone + NADPH + (n+1) H(+)(in) = a plastoquinol + NADP(+) + n H(+)(out). NDH-1 shuttles electrons from an unknown electron donor, via FMN and iron-sulfur (Fe-S) centers, to quinones in the respiratory and/or the photosynthetic chain. The immediate electron acceptor for the enzyme in this species is believed to be plastoquinone. Couples the redox reaction to proton translocation, and thus conserves the redox energy in a proton gradient. Cyanobacterial NDH-1 also plays a role in inorganic carbon-concentration. In Prochlorococcus marinus (strain MIT 9313), this protein is NAD(P)H-quinone oxidoreductase subunit N.